Reading from the N-terminus, the 241-residue chain is Hybrid peroxiredoxin hyPrx5 (241 aa).

Positions Ser3–Gln167 constitute a Thioredoxin domain. Cys49 acts as the Cysteine sulfenic acid (-SOH) intermediate; for peroxiredoxin activity in catalysis. The 72-residue stretch at Glu170–Ala241 folds into the Glutaredoxin domain. Cys180 and Cys183 are oxidised to a cystine.

The protein in the N-terminal section; belongs to the peroxiredoxin family. Prx5 subfamily. It in the C-terminal section; belongs to the glutaredoxin family. As to quaternary structure, homotetramer; interconnecting Prx and Grx domains of different monomers.

The catalysed reaction is a hydroperoxide + 2 glutathione = an alcohol + glutathione disulfide + H2O. Functionally, thiol-specific peroxidase that catalyzes the reduction of hydrogen peroxide and organic hydroperoxides to water and alcohols, respectively. Plays a role in cell protection against oxidative stress by detoxifying peroxides. The protein is Hybrid peroxiredoxin hyPrx5 (PGdx) of Haemophilus influenzae (strain ATCC 51907 / DSM 11121 / KW20 / Rd).